A 168-amino-acid polypeptide reads, in one-letter code: MRTQSLYQPHFGHGSYTTRNVAKNTDIGKENGLISELVYNERQPAVAQLLLPLLLQLGKQSRWLLWLTPQQKLSKQWLQQSGLPVDKMVQLSQISPVNTVEAMEKALQTGNYSVVLGWLPELTEEDRLKLRRAAELGNAYGFIMRPQRDISPTHGHCSTLKIHSSLYH.

The segment at 106–112 (ALQTGNY) is ftsZ binding. Residues 161–168 (KIHSSLYH) form a lon protease binding region.

This sequence belongs to the SulA family. Interacts with FtsZ. Is rapidly cleaved and degraded by the Lon protease once DNA damage is repaired.

Its function is as follows. Component of the SOS system and an inhibitor of cell division. Accumulation of SulA causes rapid cessation of cell division and the appearance of long, non-septate filaments. In the presence of GTP, binds a polymerization-competent form of FtsZ in a 1:1 ratio, thus inhibiting FtsZ polymerization and therefore preventing it from participating in the assembly of the Z ring. This mechanism prevents the premature segregation of damaged DNA to daughter cells during cell division. This chain is Cell division inhibitor SulA, found in Serratia marcescens.